A 327-amino-acid polypeptide reads, in one-letter code: Ketol-acid reductoisomerase (NADP(+)) (327 aa).

In terms of domain architecture, KARI N-terminal Rossmann spans 2–182 (AKIYTDKDAS…GATRAGVIET (181 aa)). NADP(+)-binding positions include 25-28 (YGIQ), R48, S53, and 83-86 (DMEQ). The active site involves H108. An NADP(+)-binding site is contributed by G134. The region spanning 183 to 327 (TFAEETETDL…GAEMRKLLFG (145 aa)) is the KARI C-terminal knotted domain. 4 residues coordinate Mg(2+): D191, E195, E227, and E231. A substrate-binding site is contributed by S252.

Belongs to the ketol-acid reductoisomerase family. It depends on Mg(2+) as a cofactor.

It carries out the reaction (2R)-2,3-dihydroxy-3-methylbutanoate + NADP(+) = (2S)-2-acetolactate + NADPH + H(+). The enzyme catalyses (2R,3R)-2,3-dihydroxy-3-methylpentanoate + NADP(+) = (S)-2-ethyl-2-hydroxy-3-oxobutanoate + NADPH + H(+). Its pathway is amino-acid biosynthesis; L-isoleucine biosynthesis; L-isoleucine from 2-oxobutanoate: step 2/4. The protein operates within amino-acid biosynthesis; L-valine biosynthesis; L-valine from pyruvate: step 2/4. Functionally, involved in the biosynthesis of branched-chain amino acids (BCAA). Catalyzes an alkyl-migration followed by a ketol-acid reduction of (S)-2-acetolactate (S2AL) to yield (R)-2,3-dihydroxy-isovalerate. In the isomerase reaction, S2AL is rearranged via a Mg-dependent methyl migration to produce 3-hydroxy-3-methyl-2-ketobutyrate (HMKB). In the reductase reaction, this 2-ketoacid undergoes a metal-dependent reduction by NADPH to yield (R)-2,3-dihydroxy-isovalerate. The protein is Ketol-acid reductoisomerase (NADP(+)) of Pyrobaculum neutrophilum (strain DSM 2338 / JCM 9278 / NBRC 100436 / V24Sta) (Thermoproteus neutrophilus).